The sequence spans 481 residues: Aspartyl/glutamyl-tRNA(Asn/Gln) amidotransferase subunit B (481 aa).

The protein belongs to the GatB/GatE family. GatB subfamily. As to quaternary structure, heterotrimer of A, B and C subunits.

It catalyses the reaction L-glutamyl-tRNA(Gln) + L-glutamine + ATP + H2O = L-glutaminyl-tRNA(Gln) + L-glutamate + ADP + phosphate + H(+). The catalysed reaction is L-aspartyl-tRNA(Asn) + L-glutamine + ATP + H2O = L-asparaginyl-tRNA(Asn) + L-glutamate + ADP + phosphate + 2 H(+). Allows the formation of correctly charged Asn-tRNA(Asn) or Gln-tRNA(Gln) through the transamidation of misacylated Asp-tRNA(Asn) or Glu-tRNA(Gln) in organisms which lack either or both of asparaginyl-tRNA or glutaminyl-tRNA synthetases. The reaction takes place in the presence of glutamine and ATP through an activated phospho-Asp-tRNA(Asn) or phospho-Glu-tRNA(Gln). The polypeptide is Aspartyl/glutamyl-tRNA(Asn/Gln) amidotransferase subunit B (Pseudomonas fluorescens (strain SBW25)).